A 478-amino-acid polypeptide reads, in one-letter code: Protein nucleotidyltransferase YdiU (478 aa).

The ATP site is built by Gly84, Gly86, Arg87, Lys107, Asp119, Gly120, Arg170, and Arg177. Asp246 acts as the Proton acceptor in catalysis. Positions 247 and 256 each coordinate Mg(2+). An ATP-binding site is contributed by Asp256.

It belongs to the SELO family. It depends on Mg(2+) as a cofactor. The cofactor is Mn(2+).

It catalyses the reaction L-seryl-[protein] + ATP = 3-O-(5'-adenylyl)-L-seryl-[protein] + diphosphate. It carries out the reaction L-threonyl-[protein] + ATP = 3-O-(5'-adenylyl)-L-threonyl-[protein] + diphosphate. The enzyme catalyses L-tyrosyl-[protein] + ATP = O-(5'-adenylyl)-L-tyrosyl-[protein] + diphosphate. The catalysed reaction is L-histidyl-[protein] + UTP = N(tele)-(5'-uridylyl)-L-histidyl-[protein] + diphosphate. It catalyses the reaction L-seryl-[protein] + UTP = O-(5'-uridylyl)-L-seryl-[protein] + diphosphate. It carries out the reaction L-tyrosyl-[protein] + UTP = O-(5'-uridylyl)-L-tyrosyl-[protein] + diphosphate. Its function is as follows. Nucleotidyltransferase involved in the post-translational modification of proteins. It can catalyze the addition of adenosine monophosphate (AMP) or uridine monophosphate (UMP) to a protein, resulting in modifications known as AMPylation and UMPylation. The protein is Protein nucleotidyltransferase YdiU of Escherichia coli O6:K15:H31 (strain 536 / UPEC).